The following is a 734-amino-acid chain: Casein kinase II subunit alpha'-interacting protein (734 aa).

A disordered region spans residues 608–654 (SLLPSTSSSTSSSSTTSSSSSVASASSDSSSSSSSSSSFSISSSSSP). Low complexity predominate over residues 612–654 (STSSSTSSSSTTSSSSSVASASSDSSSSSSSSSSFSISSSSSP).

As to quaternary structure, interacts (via C-terminus) with CSNK2A2. In terms of processing, phosphorylated by CK2 (casein kinase II), specifically by complexes containing catalytic subunit CSNK2A2.

It localises to the nucleus. Its function is as follows. May play a role in chromatin regulation of male germ cells. In Homo sapiens (Human), this protein is Casein kinase II subunit alpha'-interacting protein.